A 230-amino-acid polypeptide reads, in one-letter code: Large ribosomal subunit protein uL1c (230 aa).

The protein belongs to the universal ribosomal protein uL1 family. In terms of assembly, part of the 50S ribosomal subunit.

It is found in the plastid. It localises to the chloroplast. Binds directly to 23S rRNA. Might be involved in E site tRNA release (Potential). In Thalassiosira pseudonana (Marine diatom), this protein is Large ribosomal subunit protein uL1c (rpl1).